The following is a 282-amino-acid chain: Pantothenate synthetase (282 aa).

26-33 (MGNLHEGH) is an ATP binding site. The Proton donor role is filled by His-33. A (R)-pantoate-binding site is contributed by Gln-57. Gln-57 lines the beta-alanine pocket. An ATP-binding site is contributed by 144–147 (GQKD). Gln-150 contributes to the (R)-pantoate binding site. ATP is bound by residues Leu-173 and 181–184 (LSSR).

It belongs to the pantothenate synthetase family. In terms of assembly, homodimer.

The protein localises to the cytoplasm. The enzyme catalyses (R)-pantoate + beta-alanine + ATP = (R)-pantothenate + AMP + diphosphate + H(+). The protein operates within cofactor biosynthesis; (R)-pantothenate biosynthesis; (R)-pantothenate from (R)-pantoate and beta-alanine: step 1/1. Catalyzes the condensation of pantoate with beta-alanine in an ATP-dependent reaction via a pantoyl-adenylate intermediate. This chain is Pantothenate synthetase, found in Albidiferax ferrireducens (strain ATCC BAA-621 / DSM 15236 / T118) (Rhodoferax ferrireducens).